We begin with the raw amino-acid sequence, 151 residues long: 6,7-dimethyl-8-ribityllumazine synthase (151 aa).

Residues phenylalanine 18, 49-51 (ALE), and 74-76 (CVI) each bind 5-amino-6-(D-ribitylamino)uracil. (2S)-2-hydroxy-3-oxobutyl phosphate is bound at residue 79–80 (ET). The active-site Proton donor is the histidine 82. Residue asparagine 107 participates in 5-amino-6-(D-ribitylamino)uracil binding. Arginine 121 serves as a coordination point for (2S)-2-hydroxy-3-oxobutyl phosphate.

The protein belongs to the DMRL synthase family.

The catalysed reaction is (2S)-2-hydroxy-3-oxobutyl phosphate + 5-amino-6-(D-ribitylamino)uracil = 6,7-dimethyl-8-(1-D-ribityl)lumazine + phosphate + 2 H2O + H(+). Its pathway is cofactor biosynthesis; riboflavin biosynthesis; riboflavin from 2-hydroxy-3-oxobutyl phosphate and 5-amino-6-(D-ribitylamino)uracil: step 1/2. Its function is as follows. Catalyzes the formation of 6,7-dimethyl-8-ribityllumazine by condensation of 5-amino-6-(D-ribitylamino)uracil with 3,4-dihydroxy-2-butanone 4-phosphate. This is the penultimate step in the biosynthesis of riboflavin. The sequence is that of 6,7-dimethyl-8-ribityllumazine synthase from Bartonella tribocorum (strain CIP 105476 / IBS 506).